A 494-amino-acid polypeptide reads, in one-letter code: PTS system cellobiose-specific EIIC component (494 aa).

Residues 8–481 form the PTS EIIC type-3 domain; the sequence is MEKYLVPVAA…IITFVIWVPF (474 aa). 9 helical membrane-spanning segments follow: residues 32 to 52, 92 to 112, 119 to 139, 188 to 208, 227 to 247, 274 to 294, 355 to 375, 406 to 426, and 463 to 483; these read FIGM…SAIV, ISAL…AFSW, AYGV…FAGL, AYFT…KLML, FLAI…YYII, IFSV…GLHG, AFAW…IILF, VVLN…SVII, and AIVL…PFVI.

It localises to the cell membrane. In terms of biological role, the phosphoenolpyruvate-dependent sugar phosphotransferase system (PTS), a major carbohydrate active transport system, catalyzes the phosphorylation of incoming sugar substrates concomitant with their translocation across the cell membrane. Involved in cellobiose transport with PtcA and PtcB. This system can also transport lactose. The sequence is that of PTS system cellobiose-specific EIIC component from Lactococcus lactis subsp. lactis (strain IL1403) (Streptococcus lactis).